The sequence spans 457 residues: ATP synthase subunit beta (457 aa).

Position 147-154 (147-154 (GGAGVGKT)) interacts with ATP.

The protein belongs to the ATPase alpha/beta chains family. As to quaternary structure, F-type ATPases have 2 components, CF(1) - the catalytic core - and CF(0) - the membrane proton channel. CF(1) has five subunits: alpha(3), beta(3), gamma(1), delta(1), epsilon(1). CF(0) has three main subunits: a(1), b(2) and c(9-12). The alpha and beta chains form an alternating ring which encloses part of the gamma chain. CF(1) is attached to CF(0) by a central stalk formed by the gamma and epsilon chains, while a peripheral stalk is formed by the delta and b chains.

The protein localises to the cell inner membrane. It catalyses the reaction ATP + H2O + 4 H(+)(in) = ADP + phosphate + 5 H(+)(out). Produces ATP from ADP in the presence of a proton gradient across the membrane. The catalytic sites are hosted primarily by the beta subunits. This chain is ATP synthase subunit beta, found in Histophilus somni (strain 2336) (Haemophilus somnus).